A 153-amino-acid polypeptide reads, in one-letter code: uncharacterized protein (153 aa).

This is an uncharacterized protein from Escherichia coli (strain K12).